The following is a 361-amino-acid chain: Replication factor C subunit 3 (361 aa).

A compositionally biased stretch (low complexity) spans 1 to 28; sequence MAGATAATPMDIDAAAPPPGAAAKGKAP. A disordered region spans residues 1 to 39; that stretch reads MAGATAATPMDIDAAAPPPGAAAKGKAPLSSTPGGRAAP. Residue 77–84 coordinates ATP; that stretch reads YGPPGTGK.

The protein belongs to the activator 1 small subunits family. In terms of assembly, heterotetramer of subunits RFC2, RFC3, RFC4 and RFC5 that can form a complex with RFC1. Expressed in roots, leaves, shoot apical meristem (SAM), flag leaves and panicles.

The protein localises to the nucleus. May be involved in DNA replication and thus regulate cell proliferation. The chain is Replication factor C subunit 3 (RFC3) from Oryza sativa subsp. japonica (Rice).